The following is a 174-amino-acid chain: Transcription antitermination protein NusB (174 aa).

The tract at residues 1 to 28 (MVEPKKPFMRKPPPKTGDKKPGDRKANR) is disordered. The segment covering 16-25 (TGDKKPGDRK) has biased composition (basic and acidic residues).

This sequence belongs to the NusB family.

Functionally, involved in transcription antitermination. Required for transcription of ribosomal RNA (rRNA) genes. Binds specifically to the boxA antiterminator sequence of the ribosomal RNA (rrn) operons. This is Transcription antitermination protein NusB from Rhodopseudomonas palustris (strain BisB5).